The primary structure comprises 311 residues: MQSLEPWHGRCRLQFQTNNGSTKHQGGCTAPFKLLRADVGDHGRCELPLLHTAGGLVGGDELSIELDLGPDSRSLITSVAAQKVYGSVGRSRLHPDGAWTQQSVTCRLEDTSDLEWLPQELVLYADALFQQTLTVSLPDNASFLSAEIVRLGRTAAGEQLNRGRWRSCLEIQRDGAHQPRWELVDRLELGDTSLNDPHGLGGAPVFGSLVWAAPMPLTGEQITLLLAGARHDRDGLEGTMRCSSLDQGLIARYAGHSSRDARFWFSRIWARTRALRGLSTPRIPRVWPLQEQPLTGQPFTANASPTAATTH.

Belongs to the UreD family. In terms of assembly, ureD, UreF and UreG form a complex that acts as a GTP-hydrolysis-dependent molecular chaperone, activating the urease apoprotein by helping to assemble the nickel containing metallocenter of UreC. The UreE protein probably delivers the nickel.

It localises to the cytoplasm. In terms of biological role, required for maturation of urease via the functional incorporation of the urease nickel metallocenter. This chain is Urease accessory protein UreD, found in Parasynechococcus marenigrum (strain WH8102).